Consider the following 211-residue polypeptide: Cytochrome c biogenesis ATP-binding export protein CcmA (211 aa).

The 193-residue stretch at leucine 17–tryptophan 209 folds into the ABC transporter domain. Residue glycine 49–serine 56 coordinates ATP.

The protein belongs to the ABC transporter superfamily. CcmA exporter (TC 3.A.1.107) family. The complex is composed of two ATP-binding proteins (CcmA) and two transmembrane proteins (CcmB).

The protein localises to the cell inner membrane. The catalysed reaction is heme b(in) + ATP + H2O = heme b(out) + ADP + phosphate + H(+). In terms of biological role, part of the ABC transporter complex CcmAB involved in the biogenesis of c-type cytochromes; once thought to export heme, this seems not to be the case, but its exact role is uncertain. Responsible for energy coupling to the transport system. The chain is Cytochrome c biogenesis ATP-binding export protein CcmA from Gluconobacter oxydans (strain 621H) (Gluconobacter suboxydans).